A 286-amino-acid polypeptide reads, in one-letter code: Protein Bride of doubletime (286 aa).

In terms of assembly, interacts with dco (via nuclear localization signal). Interacts with Ankrd49; interaction promotes the stability of both complex members.

The protein resides in the cytoplasm. It is found in the cytosol. The protein localises to the cell membrane. Its function is as follows. Functions in planar polarity establishment and circadian rhythms by promoting the activity and localization of dco/dbt. Required for regulating the levels of dco/dbt and per in the nuclei of photoreceptor cells and thereby is involved in normal oscillations of the circadian clock proteins in the eye. In the dark, the cry circadian and rhodopsin visual pathways, activate the accumulation of the protein into Arr1- and Arr2-dependent cytosolic foci which are required for dco localization to photoreceptor nuclei. It is possible that the accumulation into foci results in the dissociation of the protein from dco, thus allowing dco to interact with importins and microtubles for nuclear transport. By promoting nuclei localization and kinase activity of dco towards per, it is essential for regulating normal cycles of per nuclear accumulation in brain circadian neurons and thus is important for normal circadian behavior. Essential for regulating the establishment of planar cell polarity in the wing. Forms a complex with Ankrd49 which likely functions in the regulation of planar polarity by promoting the activity of dco during planar polarity establishment. Within the complex, directly promotes dco activity in regulating phosphorylation and asymmetric localization of core planar polarity proteins such as dsh. The chain is Protein Bride of doubletime from Drosophila melanogaster (Fruit fly).